Reading from the N-terminus, the 144-residue chain is Kunitz-type elastase inhibitor BrEI (144 aa).

Asn38 carries an N-linked (GlcNAc...) asparagine glycan. A disulfide bridge links Cys41 with Cys88.

Belongs to the leguminous Kunitz-type inhibitor family.

Its function is as follows. Inhibitor of porcine pancreatic elastase with a Ki of 27 nM. Does not inhibit human neutrophil elastase, bovine trypsin, human plasma kallikrein or porcine pancreatic kallikrein. The protein is Kunitz-type elastase inhibitor BrEI of Bauhinia rufa (Orchid tree).